A 692-amino-acid chain; its full sequence is Elongation factor G (692 aa).

A tr-type G domain is found at 8–283 (NRIRNIGIAA…AVIDYLPAPT (276 aa)). Residues 17–24 (AHIDAGKT), 81–85 (DTPGH), and 135–138 (NKMD) contribute to the GTP site.

Belongs to the TRAFAC class translation factor GTPase superfamily. Classic translation factor GTPase family. EF-G/EF-2 subfamily.

It localises to the cytoplasm. Its function is as follows. Catalyzes the GTP-dependent ribosomal translocation step during translation elongation. During this step, the ribosome changes from the pre-translocational (PRE) to the post-translocational (POST) state as the newly formed A-site-bound peptidyl-tRNA and P-site-bound deacylated tRNA move to the P and E sites, respectively. Catalyzes the coordinated movement of the two tRNA molecules, the mRNA and conformational changes in the ribosome. In Helicobacter pylori (strain G27), this protein is Elongation factor G.